We begin with the raw amino-acid sequence, 152 residues long: MTQKLHINPHLLIVEARFYNEISDELLAGAVSVLQKSGVSYDIITVPGALEIPAAIAFAEKDKTVFYDGYVALGCVIRGETYHFEIVADNSCRALMDLTVHQQLAIGNGILTVENEKQAWARAKQGEKNKGDFAAEAALCMIALKKRFGDNR.

Residues Phe-18, 49–51 (ALE), and 75–77 (CVI) each bind 5-amino-6-(D-ribitylamino)uracil. 80 to 81 (ET) contacts (2S)-2-hydroxy-3-oxobutyl phosphate. The Proton donor role is filled by His-83. Asn-108 lines the 5-amino-6-(D-ribitylamino)uracil pocket. A (2S)-2-hydroxy-3-oxobutyl phosphate-binding site is contributed by Arg-122.

The protein belongs to the DMRL synthase family.

The catalysed reaction is (2S)-2-hydroxy-3-oxobutyl phosphate + 5-amino-6-(D-ribitylamino)uracil = 6,7-dimethyl-8-(1-D-ribityl)lumazine + phosphate + 2 H2O + H(+). It functions in the pathway cofactor biosynthesis; riboflavin biosynthesis; riboflavin from 2-hydroxy-3-oxobutyl phosphate and 5-amino-6-(D-ribitylamino)uracil: step 1/2. In terms of biological role, catalyzes the formation of 6,7-dimethyl-8-ribityllumazine by condensation of 5-amino-6-(D-ribitylamino)uracil with 3,4-dihydroxy-2-butanone 4-phosphate. This is the penultimate step in the biosynthesis of riboflavin. The protein is 6,7-dimethyl-8-ribityllumazine synthase of Bartonella bacilliformis (strain ATCC 35685 / KC583 / Herrer 020/F12,63).